The chain runs to 128 residues: Claw keratin (128 aa).

Tandem repeats lie at residues G83–Y91 and G92–Y100. Residues G83–G104 form a 3 X 9 AA tandem repeats, Gly-rich region. One copy of the 3; approximate repeat lies at G101–C109.

The protein belongs to the avian keratin family. As to expression, abundantly expressed in the claw and at a low level in feather tissue.

The polypeptide is Claw keratin (CKER1) (Gallus gallus (Chicken)).